A 223-amino-acid polypeptide reads, in one-letter code: Neurotrophic factor BDNF precursor form (223 aa).

An N-terminal signal peptide occupies residues 1–5; sequence SCMKA. Residues 6 to 114 constitute a propeptide that is removed on maturation; that stretch reads APMKEVSIRG…AANMSMRVRR (109 aa). An N-linked (GlcNAc...) asparagine glycan is attached at Asn-107. 2 cysteine pairs are disulfide-bonded: Cys-127–Cys-194 and Cys-172–Cys-223.

The protein belongs to the NGF-beta family.

It localises to the secreted. Its function is as follows. Promotes the survival of neuronal populations that are all located either in the central nervous system or directly connected to it. The protein is Neurotrophic factor BDNF precursor form (BDNF) of Eryx johnii (Indian red sand boa).